Consider the following 223-residue polypeptide: Endo-1,4-beta-xylanase 2 (223 aa).

A signal peptide spans 1-19 (MVSFTSLLAGVAAISGVLA). A propeptide spanning residues 20-33 (APAAEVESVAVEKR) is cleaved from the precursor. Gln34 is modified (pyrrolidone carboxylic acid). Positions 34–222 (QTIQPGTGYN…FSSGSASITV (189 aa)) constitute a GH11 domain. N-linked (GlcNAc...) asparagine glycosylation is found at Asn71 and Asn94. Positions 106 and 110 each coordinate substrate. Glu119 functions as the Nucleophile in the catalytic mechanism. The substrate site is built by Tyr121, Arg155, Pro159, Gln169, and Tyr204. Glu210 functions as the Proton donor in the catalytic mechanism.

It belongs to the glycosyl hydrolase 11 (cellulase G) family.

It localises to the secreted. The enzyme catalyses Endohydrolysis of (1-&gt;4)-beta-D-xylosidic linkages in xylans.. Its pathway is glycan degradation; xylan degradation. Functionally, glycoside hydrolase involved in the hydrolysis of xylan, a major plant cell wall hemicellulose made up of 1,4-beta-linked D-xylopyranose residues. Catalyzes the endohydrolysis of the main-chain 1,4-beta-glycosidic bonds connecting the xylose subunits yielding various xylooligosaccharides and xylose. The catalysis proceeds by a double-displacement reaction mechanism with a putative covalent glycosyl-enzyme intermediate, with retention of the anomeric configuration. Produces xylobiose and xylose as the main degradation products. This is Endo-1,4-beta-xylanase 2 from Hypocrea jecorina (strain ATCC 56765 / BCRC 32924 / NRRL 11460 / Rut C-30) (Trichoderma reesei).